A 363-amino-acid polypeptide reads, in one-letter code: Putative RAD2-like endonuclease 095R (363 aa).

Belongs to the XPG/RAD2 endonuclease family. It depends on Mg(2+) as a cofactor.

The protein resides in the host nucleus. Functionally, probable endonuclease. This is Putative RAD2-like endonuclease 095R from Frog virus 3 (isolate Goorha) (FV-3).